Reading from the N-terminus, the 104-residue chain is T-complex protein 1 subunit zeta (104 aa).

G24 provides a ligand contact to ADP. G24 is a binding site for ATP. D75 contacts Mg(2+). Residues G76, T78, and S79 each contribute to the ADP site. Positions 76 and 78 each coordinate ATP.

The protein belongs to the TCP-1 chaperonin family. As to quaternary structure, component of the chaperonin-containing T-complex (TRiC), a hexadecamer composed of two identical back-to-back stacked rings enclosing a protein folding chamber. Each ring is made up of eight different subunits: TCP1/CCT1, CCT2, CCT3, CCT4, CCT5, CCT6A/CCT6, CCT7, CCT8. Interacts with PACRG.

The protein resides in the cytoplasm. It carries out the reaction ATP + H2O = ADP + phosphate + H(+). Component of the chaperonin-containing T-complex (TRiC), a molecular chaperone complex that assists the folding of actin, tubulin and other proteins upon ATP hydrolysis. The TRiC complex mediates the folding of WRAP53/TCAB1, thereby regulating telomere maintenance. The chain is T-complex protein 1 subunit zeta (CCT6) from Sus scrofa (Pig).